Consider the following 311-residue polypeptide: Probable cell division protein WhiA (311 aa).

Residues 274–308 constitute a DNA-binding region (H-T-H motif); it reads SLKELGEMIPSGAISKSGINHRIRKINEFAEKLRE.

This sequence belongs to the WhiA family.

Its function is as follows. Involved in cell division and chromosome segregation. In Enterococcus faecalis (strain ATCC 700802 / V583), this protein is Probable cell division protein WhiA.